The following is a 609-amino-acid chain: Actin-interacting protein 1-2 (609 aa).

WD repeat units lie at residues 2–42 (ELSE…VTLD), 54–93 (EHAYPATVARYSPNGEWIASGDVSGTVRIWGAYNDHVLKN), 97–141 (VLAG…GEFD), 142–182 (GHSR…FKLS), 185–224 (EHSNFVNCVRFAPDGSKFITVSSDKKGIIYDGKTCEILGE), 230–269 (GHKGSIYAVSWSPDGKQVLTVSADKSAKIWDISDNGSGSL), 277–318 (GSSG…KSPF), 322–362 (GHMK…CGKL), 445–484 (NLGFIVTALAVTPDGTEAVIGGQDGKLHLYSINGDSLTEE), 489–528 (RHRGAISVIRYSPDLSMFASADLNREAVVWDRVSREMKLK), 532–571 (YHSARINCLAWSPNSTMVATGSLDTCVIVYEVDKPASSRM), and 576–609 (AHLGGVYGLGFADDSHVVSSGEDACIRVWSFTPQ).

As to expression, expressed in leaves, stems, flower buds and flowers.

Functionally, binds actin. Enhances the F-actin depolymerization activity of actin-depolymerizing factor (ADF) proteins. The polypeptide is Actin-interacting protein 1-2 (Arabidopsis thaliana (Mouse-ear cress)).